The sequence spans 369 residues: Anhydro-N-acetylmuramic acid kinase (369 aa).

12-19 (GTSMDGVD) lines the ATP pocket.

This sequence belongs to the anhydro-N-acetylmuramic acid kinase family.

It catalyses the reaction 1,6-anhydro-N-acetyl-beta-muramate + ATP + H2O = N-acetyl-D-muramate 6-phosphate + ADP + H(+). Its pathway is amino-sugar metabolism; 1,6-anhydro-N-acetylmuramate degradation. The protein operates within cell wall biogenesis; peptidoglycan recycling. Functionally, catalyzes the specific phosphorylation of 1,6-anhydro-N-acetylmuramic acid (anhMurNAc) with the simultaneous cleavage of the 1,6-anhydro ring, generating MurNAc-6-P. Is required for the utilization of anhMurNAc either imported from the medium or derived from its own cell wall murein, and thus plays a role in cell wall recycling. This is Anhydro-N-acetylmuramic acid kinase from Shewanella pealeana (strain ATCC 700345 / ANG-SQ1).